The following is a 264-amino-acid chain: Low molecular mass lipoprotein PBMHP-12 (264 aa).

The N-terminal stretch at 1–16 (MKLLVVFAMCVPAASA) is a signal peptide.

The protein belongs to the 30 kDa lipoprotein family.

It localises to the secreted. The sequence is that of Low molecular mass lipoprotein PBMHP-12 from Bombyx mori (Silk moth).